A 244-amino-acid chain; its full sequence is DNA repair protein RecO (244 aa).

The protein belongs to the RecO family.

Functionally, involved in DNA repair and RecF pathway recombination. This chain is DNA repair protein RecO, found in Jannaschia sp. (strain CCS1).